The sequence spans 351 residues: tRNA pseudouridine synthase D (351 aa).

The active-site Nucleophile is the Asp-81. The region spanning 158 to 304 is the TRUD domain; that stretch reads GVPNYFGSQR…MRHERRAIEL (147 aa).

The protein belongs to the pseudouridine synthase TruD family.

The enzyme catalyses uridine(13) in tRNA = pseudouridine(13) in tRNA. In terms of biological role, responsible for synthesis of pseudouridine from uracil-13 in transfer RNAs. The polypeptide is tRNA pseudouridine synthase D (Aliivibrio fischeri (strain ATCC 700601 / ES114) (Vibrio fischeri)).